Here is a 262-residue protein sequence, read N- to C-terminus: MQVDLLSSAQSAHALHLFHKHSPLVHCMTNDVVQTFTANTLLALGASPAMVIETEEASQFAAIASALLINVGTLTQPRAQAMRAAVEQAKRSQTPWTLDPVAVGALDYRRRFCLELLSHKPTAIRGNASEIMALAGVANGGRGVDTTDAAANAIPAAQTLARETGAIVVVTGEVDYVTDGHRIVGIHGGDPLMTKVVGTGCALSAVVAACCALPGDTLENIAFACHWMKQAGERAVARSEGPGSFVPHFLDALWQLTQEVQA.

M50 serves as a coordination point for substrate. Residues R125 and T171 each coordinate ATP. G198 is a binding site for substrate.

It belongs to the Thz kinase family. Requires Mg(2+) as cofactor.

It carries out the reaction 5-(2-hydroxyethyl)-4-methylthiazole + ATP = 4-methyl-5-(2-phosphooxyethyl)-thiazole + ADP + H(+). Its pathway is cofactor biosynthesis; thiamine diphosphate biosynthesis; 4-methyl-5-(2-phosphoethyl)-thiazole from 5-(2-hydroxyethyl)-4-methylthiazole: step 1/1. In terms of biological role, catalyzes the phosphorylation of the hydroxyl group of 4-methyl-5-beta-hydroxyethylthiazole (THZ). In Escherichia coli (strain SMS-3-5 / SECEC), this protein is Hydroxyethylthiazole kinase.